The sequence spans 397 residues: MGKEKFERTKPHVNIGTIGHIDHGKTTLTAAITKIASLKMGSKAVAYDEIDKAPEEKERGITIATAHVEYETTLRHYAHVDCPGHADYIKNMITGAAQMDGAIIVVAATDGPMPQTREHILLARQVGVPSIVVFLNKCDMVDDEELLELVELEVRELLSSYDFPGDDTPVIRGSALKALECDSADDDAAKPILELLDACDSYIPEPERDTDKPFLMPIEDVFSISGRGTVVTGRVERGIIKVGEQIEIVGIKDTMTTTCTGVEMFRKLLDQGQAGDNVGVLLRGVKRDDVERGQVLAAPKSITPHKKFKAEVYVLSKEEGGRHTPFFSGYRPQFYFRTTDITGIIGLEEGVEMVMPGDNATFIVELIHPVAMEQGLRFAIREGGRTVGAGVVSEILE.

The region spanning lysine 10–glutamate 207 is the tr-type G domain. Residues glycine 19–threonine 26 form a G1 region. Residue glycine 19–threonine 26 participates in GTP binding. Mg(2+) is bound at residue threonine 26. The tract at residues glycine 60–alanine 64 is G2. The tract at residues aspartate 81–glycine 84 is G3. Residues aspartate 81–histidine 85 and asparagine 136–aspartate 139 contribute to the GTP site. The interval asparagine 136 to aspartate 139 is G4. The segment at serine 174–leucine 176 is G5.

This sequence belongs to the TRAFAC class translation factor GTPase superfamily. Classic translation factor GTPase family. EF-Tu/EF-1A subfamily. In terms of assembly, monomer.

The protein localises to the cytoplasm. It catalyses the reaction GTP + H2O = GDP + phosphate + H(+). In terms of biological role, GTP hydrolase that promotes the GTP-dependent binding of aminoacyl-tRNA to the A-site of ribosomes during protein biosynthesis. The polypeptide is Elongation factor Tu (Oleidesulfovibrio alaskensis (strain ATCC BAA-1058 / DSM 17464 / G20) (Desulfovibrio alaskensis)).